Consider the following 385-residue polypeptide: MTAISLGMPDVPTRLAERRKSRQIQVGPVAVGGDAPVSVQSMTTTRTSDIGATLQQIAELTASGCQIVRVACPTQDDADALPVIARKSQIPVIADIHFQPKYVFAAIEAGCAAVRVNPGNIKQFDDKVKEIAKAAKDHGTPIRIGVNAGSLDRRLLQKYGRATPEALAESALWEASLFEEHDFRDIKISVKHNDPVVMVEAYRQLAAQCDYPLHLGVTEAGPAFQGTIKSAVAFGALLSQGIGDTIRVSLSAPPVEEIKVGIQILESLNLRQRGLEIVSCPSCGRAQVDVYKLAEEVTAGLEGMEVPLRVAVMGCVVNGPGEAREADLGVASGNGKGQIFVKGEVIKTVPESKIVETLIDEAMKIAEQMEKDGVTSGEPSVSVAG.

The [4Fe-4S] cluster site is built by Cys-280, Cys-283, Cys-315, and Glu-322.

The protein belongs to the IspG family. The cofactor is [4Fe-4S] cluster.

The catalysed reaction is (2E)-4-hydroxy-3-methylbut-2-enyl diphosphate + oxidized [flavodoxin] + H2O + 2 H(+) = 2-C-methyl-D-erythritol 2,4-cyclic diphosphate + reduced [flavodoxin]. The protein operates within isoprenoid biosynthesis; isopentenyl diphosphate biosynthesis via DXP pathway; isopentenyl diphosphate from 1-deoxy-D-xylulose 5-phosphate: step 5/6. Functionally, converts 2C-methyl-D-erythritol 2,4-cyclodiphosphate (ME-2,4cPP) into 1-hydroxy-2-methyl-2-(E)-butenyl 4-diphosphate. The protein is 4-hydroxy-3-methylbut-2-en-1-yl diphosphate synthase (flavodoxin) 2 of Streptomyces coelicolor (strain ATCC BAA-471 / A3(2) / M145).